Reading from the N-terminus, the 411-residue chain is Dihydrosphingosine 1-phosphate phosphatase C823.11 (411 aa).

Topologically, residues 1–74 are lumenal; it reads MVHKKKNVDI…LDVYFMYTAT (74 aa). A helical membrane pass occupies residues 75-95; sequence LGTHVFFMLALPIFFWSGCIY. Topologically, residues 96 to 99 are cytoplasmic; sequence YTLD. Residues 100–120 traverse the membrane as a helical segment; the sequence is ITQLFAAGVYFSGCIKDYFCL. Positions 115-123 are phosphatase sequence motif I; the sequence is KDYFCLPRP. Topologically, residues 121 to 170 are lumenal; it reads PRPRSPPMVRLTLSSDAEYEYGFPSTHTTNAMATGFYSLFLLLSMSDSMS. Positions 144–147 are phosphatase sequence motif II; sequence PSTH. H147 serves as the catalytic Proton donor. A helical membrane pass occupies residues 171–191; the sequence is SISYYFLLSLVLLYIASISLG. Residues 191-202 form a phosphatase sequence motif III region; the sequence is GRIYCGMHGFMD. The Cytoplasmic segment spans residues 192 to 195; it reads RIYC. Residues 196-216 traverse the membrane as a helical segment; the sequence is GMHGFMDVSTGTILGVTLAIF. H198 acts as the Nucleophile in catalysis. Residues 217–233 lie on the Lumenal side of the membrane; sequence QWKYADFFHNVWSSSST. Residues 234 to 254 form a helical membrane-spanning segment; the sequence is SVPILSVVLALFFIWFHPQPA. The Cytoplasmic segment spans residues 255–259; it reads ERCIC. The helical transmembrane segment at 260-280 threads the bilayer; it reads LEDSISFISVIMGIDLGTWFA. Topologically, residues 281 to 293 are lumenal; sequence SPESLSHLHDNLN. A helical transmembrane segment spans residues 294–314; the sequence is SYFLLKFFVRVLFGVCMILIW. Topologically, residues 315–387 are cytoplasmic; that stretch reads KSFAKQALLA…VRFDIETIAR (73 aa). A helical membrane pass occupies residues 388–408; that stretch reads IIVYSGIGFLCTYFAPKVFLK. At 409–411 the chain is on the lumenal side; that stretch reads WKI.

It belongs to the type 2 lipid phosphate phosphatase family.

Its subcellular location is the endoplasmic reticulum membrane. In terms of biological role, dihydrosphingosine 1-phosphate phosphatase required for efficient ceramide synthesis from exogenous sphingoid bases. Involved in endocytosis and calcium-mediated signaling. This chain is Dihydrosphingosine 1-phosphate phosphatase C823.11, found in Schizosaccharomyces pombe (strain 972 / ATCC 24843) (Fission yeast).